A 282-amino-acid polypeptide reads, in one-letter code: MSLKSYMQLVRIHNVIGAALGAIMGFLVSSQWYLELKGILLSALVVGLIAAGGYVINDVYDVEIDKINKPYRPIPSGKISVNKAKALSIALFIIGIALSILLNIYALVIALVTAIGLIYYAKDLKKTGFYGNLLVATTTALSIFYGGLAFFSDNWLLRIIIPTLYAFFLTLIREIVKGIEDYNGDSLNNVKTLATTLGINKSWRIAKILLVLLLIISPLPFFIGFNLIYLILLILVFIPFTILSIIQKETIEGASKARTYLKISAISGIIAFLLGSLPFFKG.

Helical transmembrane passes span 15 to 35 (VIGA…WYLE), 36 to 56 (LKGI…GYVI), 81 to 100 (VNKA…ALSI), 104 to 121 (IYAL…IYYA), 131 to 151 (GNLL…LAFF), 159 to 179 (IIIP…VKGI), 201 to 221 (KSWR…PLPF), 222 to 242 (FIGF…PFTI), and 260 to 280 (YLKI…LPFF).

The protein belongs to the UbiA prenyltransferase family. DGGGP synthase subfamily. Requires Mg(2+) as cofactor. The cofactor is Ca(2+).

Its subcellular location is the cell membrane. The catalysed reaction is sn-3-O-(geranylgeranyl)glycerol 1-phosphate + (2E,6E,10E)-geranylgeranyl diphosphate = 2,3-bis-O-(geranylgeranyl)-sn-glycerol 1-phosphate + diphosphate. It functions in the pathway membrane lipid metabolism; glycerophospholipid metabolism. With respect to regulation, inhibited by EDTA in vitro. Its function is as follows. Prenyltransferase that catalyzes the transfer of the geranylgeranyl moiety of geranylgeranyl diphosphate (GGPP) to the C2 hydroxyl of (S)-3-O-geranylgeranylglyceryl phosphate (GGGP). This reaction is the second ether-bond-formation step in the biosynthesis of archaeal membrane lipids. Cannot use other prenyl donors, i.e. farnesyl diphosphate (FPP) and phytyl diphosphate. Moreover, 4-hydroxybenzoate, 1,4-dihydroxy 2-naphthoate, homogentisate, and alpha-glycerophosphate do not function as prenyl acceptor substrates. The chain is Digeranylgeranylglyceryl phosphate synthase (ubiA-2) from Saccharolobus solfataricus (strain ATCC 35092 / DSM 1617 / JCM 11322 / P2) (Sulfolobus solfataricus).